The following is a 243-amino-acid chain: 7-cyano-7-deazaguanine synthase (243 aa).

Position 18–28 (18–28 (FSGGQDSATCL)) interacts with ATP. Residues cysteine 206, cysteine 221, cysteine 224, and cysteine 227 each contribute to the Zn(2+) site.

It belongs to the QueC family. Zn(2+) is required as a cofactor.

It carries out the reaction 7-carboxy-7-deazaguanine + NH4(+) + ATP = 7-cyano-7-deazaguanine + ADP + phosphate + H2O + H(+). Its pathway is purine metabolism; 7-cyano-7-deazaguanine biosynthesis. Its function is as follows. Catalyzes the ATP-dependent conversion of 7-carboxy-7-deazaguanine (CDG) to 7-cyano-7-deazaguanine (preQ(0)). This Maricaulis maris (strain MCS10) (Caulobacter maris) protein is 7-cyano-7-deazaguanine synthase.